The sequence spans 191 residues: Large ribosomal subunit protein uL5 (191 aa).

This sequence belongs to the universal ribosomal protein uL5 family. Part of the 50S ribosomal subunit; part of the 5S rRNA/L5/L18/L25 subcomplex. Contacts the 5S rRNA and the P site tRNA. Forms a bridge to the 30S subunit in the 70S ribosome.

This is one of the proteins that bind and probably mediate the attachment of the 5S RNA into the large ribosomal subunit, where it forms part of the central protuberance. In the 70S ribosome it contacts protein S13 of the 30S subunit (bridge B1b), connecting the 2 subunits; this bridge is implicated in subunit movement. Contacts the P site tRNA; the 5S rRNA and some of its associated proteins might help stabilize positioning of ribosome-bound tRNAs. The sequence is that of Large ribosomal subunit protein uL5 from Corynebacterium glutamicum (strain R).